A 162-amino-acid chain; its full sequence is NADH-quinone oxidoreductase subunit I 1 (162 aa).

4Fe-4S ferredoxin-type domains are found at residues 44 to 74 (LRTY…VQAA) and 90 to 119 (YKYQ…LTQE). [4Fe-4S] cluster-binding residues include cysteine 54, cysteine 57, cysteine 60, cysteine 64, cysteine 99, cysteine 102, cysteine 105, and cysteine 109.

The protein belongs to the complex I 23 kDa subunit family. In terms of assembly, NDH-1 is composed of 14 different subunits. Subunits NuoA, H, J, K, L, M, N constitute the membrane sector of the complex. [4Fe-4S] cluster is required as a cofactor.

Its subcellular location is the cell membrane. The catalysed reaction is a quinone + NADH + 5 H(+)(in) = a quinol + NAD(+) + 4 H(+)(out). NDH-1 shuttles electrons from NADH, via FMN and iron-sulfur (Fe-S) centers, to quinones in the respiratory chain. The immediate electron acceptor for the enzyme in this species is believed to be ubiquinone. Couples the redox reaction to proton translocation (for every two electrons transferred, four hydrogen ions are translocated across the cytoplasmic membrane), and thus conserves the redox energy in a proton gradient. The polypeptide is NADH-quinone oxidoreductase subunit I 1 (Symbiobacterium thermophilum (strain DSM 24528 / JCM 14929 / IAM 14863 / T)).